The sequence spans 454 residues: Putative F-box/LRR-repeat protein At3g58880 (454 aa).

The region spanning V2 to D48 is the F-box domain. LRR repeat units follow at residues L77–N102, S144–S168, V169–N194, I214–A240, L270–P301, T303–S327, and S328–G353.

This chain is Putative F-box/LRR-repeat protein At3g58880, found in Arabidopsis thaliana (Mouse-ear cress).